A 333-amino-acid polypeptide reads, in one-letter code: Protein APEM9 (333 aa).

At 1–90 (MEATDIWGEI…ELRDVFGEVA (90 aa)) the chain is on the cytoplasmic side. The helical transmembrane segment at 91-102 (AIPVQVLLTGVC) threads the bilayer. Residues 103–268 (LQISNGSYLG…KVGNTQFSMS (166 aa)) are Peroxisomal-facing. The chain crosses the membrane as a helical span at residues 269-285 (RGKVAVSLVGLIICYAL). Residues 286-333 (KRKRAALIRIIRRQMESTRKAIVDFWKLAFSYQVNPLAAIQSIPSTTT) lie on the Cytoplasmic side of the membrane.

Interacts with PEX6 and PEX19-1, but not with PEX1. Interacts (via N-terminus) with PEX13, and (via N-terminus and C-terminus) with PEX16. In terms of tissue distribution, expressed in roots, leaves, stems, flowers, buds and fruits.

The protein localises to the peroxisome membrane. Involved in peroxisome biogenesis and matrix protein import. Required for pollen maturation and in vivo germination via its role in peroxisomal function, which partially involves jasmonic acid biosynthesis. Transported to peroxisomes via the interaction with PEX19-1. Required for peroxisomal protein import by acting as an anchoring protein for the AAA ATPase complex, which consists of PEX1 and PEX6. The protein is Protein APEM9 of Arabidopsis thaliana (Mouse-ear cress).